The sequence spans 362 residues: Putative gustatory receptor 89a (362 aa).

At 1 to 38 the chain is on the cytoplasmic side; it reads MLRFPHVCGLCLLLKYWQILALAPFRTSEPMVARCQRW. The helical transmembrane segment at 39–59 threads the bilayer; that stretch reads MTLIAVFRWLLLTSMAPFVLW. The Extracellular portion of the chain corresponds to 60–74; it reads KSAAMYEATNVRHSM. Residues 75-95 form a helical membrane-spanning segment; that stretch reads VFKTIALATMTGDVCISLALL. Residues 96-126 lie on the Cytoplasmic side of the membrane; the sequence is GNHLWNRRELANLVNDLARLHRRRRLSWWST. A helical transmembrane segment spans residues 127-147; the sequence is LFLWLKLLLSLYDLLCSVPFL. At 148 to 166 the chain is on the extracellular side; it reads KGAGGRLPWSQLVAYGVQL. The helical transmembrane segment at 167-187 threads the bilayer; sequence YFQHVASVYGNGIFGGILLML. Over 188–223 the chain is Cytoplasmic; that stretch reads ECYNQLEREEPTNLARLLQKEYSWLRLIQRFVKLFQ. Residues 224-244 form a helical membrane-spanning segment; sequence LGIFLLVLGSFVNIMVNIYAF. The Extracellular segment spans residues 245–255; the sequence is MSYYVSLHGVP. A helical membrane pass occupies residues 256 to 276; sequence LTISNNCLVLAIQLYAVILAA. Residues 277–333 lie on the Cytoplasmic side of the membrane; sequence HLCQVRSAKLRKKCLQLEYVPEGLTQEQAMASTPFPVLTPTGNVKFRILGVFILDNS. The chain crosses the membrane as a helical span at residues 334–354; that stretch reads FWLFLVSYAMNFIVVILQTSF. The Extracellular segment spans residues 355-362; that stretch reads EHINHGEI.

Belongs to the insect chemoreceptor superfamily. Gustatory receptor (GR) family. Gr77a subfamily.

The protein localises to the cell membrane. Functionally, probable gustatory receptor which mediates acceptance or avoidance behavior, depending on its substrates. The polypeptide is Putative gustatory receptor 89a (Gr89a) (Drosophila melanogaster (Fruit fly)).